Here is a 117-residue protein sequence, read N- to C-terminus: Ig heavy chain V region MOPC 173 (117 aa).

In terms of domain architecture, Ig-like spans 1–116; sequence EVKLLESGGP…WGQGTSVTVS (116 aa). Cys22 and Cys96 are disulfide-bonded.

This is Ig heavy chain V region MOPC 173 from Mus musculus (Mouse).